The chain runs to 245 residues: Probable transcriptional regulatory protein SUN_1622 (245 aa).

It belongs to the TACO1 family.

It localises to the cytoplasm. The sequence is that of Probable transcriptional regulatory protein SUN_1622 from Sulfurovum sp. (strain NBC37-1).